A 116-amino-acid chain; its full sequence is uncharacterized protein (116 aa).

Residues 20–42 traverse the membrane as a helical segment; sequence YLNKYYSVITYFLAFLTKFAILL. Residues 95 to 116 form a disordered region; that stretch reads IEFQSKSSPVPPASESNKGINE.

It localises to the membrane. This is an uncharacterized protein from Saccharomyces cerevisiae (strain ATCC 204508 / S288c) (Baker's yeast).